A 327-amino-acid chain; its full sequence is Phosphoenolpyruvate transferase (327 aa).

Aspartate 59 lines the 7,8-didemethyl-8-hydroxy-5-deazariboflavin pocket.

The protein belongs to the CofD family. As to quaternary structure, homodimer. Requires Mg(2+) as cofactor.

The enzyme catalyses enolpyruvoyl-2-diphospho-5'-guanosine + 7,8-didemethyl-8-hydroxy-5-deazariboflavin = dehydro coenzyme F420-0 + GMP + H(+). Its pathway is cofactor biosynthesis; coenzyme F420 biosynthesis. Functionally, catalyzes the transfer of the phosphoenolpyruvate moiety from enoylpyruvoyl-2-diphospho-5'-guanosine (EPPG) to 7,8-didemethyl-8-hydroxy-5-deazariboflavin (FO) with the formation of dehydro coenzyme F420-0 and GMP. This chain is Phosphoenolpyruvate transferase, found in Mycolicibacterium smegmatis (strain ATCC 700084 / mc(2)155) (Mycobacterium smegmatis).